The sequence spans 289 residues: NAD kinase (289 aa).

Residue Asp-63 is the Proton acceptor of the active site. NAD(+)-binding positions include 63–64 (DG), Arg-68, 138–139 (ND), Arg-149, Asp-168, 179–184 (TGYSLS), and Gln-238.

The protein belongs to the NAD kinase family. Requires a divalent metal cation as cofactor.

It is found in the cytoplasm. The catalysed reaction is NAD(+) + ATP = ADP + NADP(+) + H(+). Its function is as follows. Involved in the regulation of the intracellular balance of NAD and NADP, and is a key enzyme in the biosynthesis of NADP. Catalyzes specifically the phosphorylation on 2'-hydroxyl of the adenosine moiety of NAD to yield NADP. The polypeptide is NAD kinase (Gemmatimonas aurantiaca (strain DSM 14586 / JCM 11422 / NBRC 100505 / T-27)).